We begin with the raw amino-acid sequence, 1151 residues long: Semaphorin-5B (1151 aa).

Topologically, residues 1 to 1036 are extracellular; that stretch reads MPCGFSPSPV…TDCAGFNLIH (1036 aa). The Sema domain occupies 103–553; the sequence is HPTVAFEDLQ…LRDGVLRVPL (451 aa). The N-linked (GlcNAc...) asparagine glycan is linked to asparagine 153. 2 cysteine pairs are disulfide-bonded: cysteine 172/cysteine 182 and cysteine 199/cysteine 208. N-linked (GlcNAc...) asparagine glycosylation is found at asparagine 236 and asparagine 345. Disulfide bonds link cysteine 322-cysteine 425 and cysteine 346-cysteine 388. Asparagine 436 is a glycosylation site (N-linked (GlcNAc...) asparagine). Residues 555–602 form the PSI domain; it reads RCAAYRSQGACLGARDPYCGWDGKQQRCSTLEDSSNMSLWTQNITACP. 2 consecutive TSP type-1 domains span residues 664–720 and 722–771; these read NGAW…TPCP and PIFW…EGCP. 6 cysteine pairs are disulfide-bonded: cysteine 676–cysteine 713, cysteine 680–cysteine 719, cysteine 691–cysteine 703, cysteine 734–cysteine 765, cysteine 738–cysteine 770, and cysteine 749–cysteine 755. Threonine 788 carries an O-linked (GalNAc...) threonine glycan. 3 TSP type-1 domains span residues 853–908, 910–965, and 966–1010; these read SGGW…QACP, RGAW…QACP, and EGWS…RPCP. Disulfide bonds link cysteine 865–cysteine 902, cysteine 869–cysteine 907, cysteine 880–cysteine 892, cysteine 922–cysteine 959, cysteine 926–cysteine 964, and cysteine 937–cysteine 949. Residues 1037–1057 traverse the membrane as a helical; Signal-anchor for type III membrane protein segment; it reads LVATGISCFLGSGLLTLAVYL. At 1058-1151 the chain is on the cytoplasmic side; sequence SCQHCQRQSQ…SPGQRCFPNS (94 aa).

This sequence belongs to the semaphorin family.

It is found in the membrane. May act as a positive axonal guidance cue. The sequence is that of Semaphorin-5B (SEMA5B) from Homo sapiens (Human).